Reading from the N-terminus, the 418-residue chain is AP-3 complex subunit mu-1 (418 aa).

An MHD domain is found at 176–417; it reads NNEAYFDVVE…VTKAGKFQVR (242 aa).

Belongs to the adaptor complexes medium subunit family. As to quaternary structure, adaptor protein complex 3 (AP-3) is a heterotetramer composed of two large adaptins (delta-type subunit AP3D1 and beta-type subunit AP3B1 or AP3B2), a medium adaptin (mu-type subunit AP3M1 or AP3M2) and a small adaptin (sigma-type subunit APS1 or AP3S2). Interacts with AGAP1. AP-3 associates with the BLOC-1 complex.

It localises to the golgi apparatus. The protein localises to the cytoplasmic vesicle membrane. Functionally, part of the AP-3 complex, an adaptor-related complex which is not clathrin-associated. The complex is associated with the Golgi region as well as more peripheral structures. It facilitates the budding of vesicles from the Golgi membrane and may be directly involved in trafficking to lysosomes. In concert with the BLOC-1 complex, AP-3 is required to target cargos into vesicles assembled at cell bodies for delivery into neurites and nerve terminals. The chain is AP-3 complex subunit mu-1 (Ap3m1) from Mus musculus (Mouse).